The following is a 269-amino-acid chain: Meiotic drive suppressor wtf5 (269 aa).

A disordered region spans residues 1–65; the sequence is MKNNYTSLKS…NTHRENHSYG (65 aa). Basic and acidic residues predominate over residues 19–30; that stretch reads KTDHEIDLEKGP. Helical transmembrane passes span 73-95, 110-132, and 206-228; these read LLII…VCYL, WTLF…YFYE, and WGLK…VFIA.

Belongs to the WTF family. In terms of assembly, homomer. Interacts with other proteins that exhibit high sequence similarity.

The protein resides in the spore membrane. It localises to the vacuole membrane. Acts as a suppressor component of the dual wtf meiotic drive system, and can suppress but not confer meiotic drive by compatible poisons. Wtf meiotic drive systems promote unequal transmission of alleles from the parental zygote to progeny spores by encoding a poison and an antidote from the same locus; the poison is trans-acting and forms toxic aggregates in all spores within an ascus, wherease the antidote is spore-specific and targets aggregates for degradation by the vacuole. Meiotic drive by wtf systems therefore lead to poisoning of all progeny that do not inherit the dual poison/antidote allele, or express a compatible antidote. The polypeptide is Meiotic drive suppressor wtf5 (Schizosaccharomyces pombe (strain 972 / ATCC 24843) (Fission yeast)).